Here is an 854-residue protein sequence, read N- to C-terminus: MPGGGPQGAPAAAGGGGVSHRAGSRDCLPPAACFRRRRLARRPGYMRSSTGPGIGFLSPAVGTLFRFPGGVSGEESHHSESRARQCGLDSRGLLVRSPVSKSAAAPTVTSVRGTSAHFGIQLRGGTRLPDRLSWPCGPGSAGWQQEFAAMDSSETLDASWEAACSDGARRVRAAGSLPSAELSSNSCSPGCGPEVPPTPPGSHSAFTSSFSFIRLSLGSAGERGEAEGCPPSREAESHCQSPQEMGAKAASLDGPHEDPRCLSRPFSLLATRVSADLAQAARNSSRPERDMHSLPDMDPGSSSSLDPSLAGCGGDGSSGSGDAHSWDTLLRKWEPVLRDCLLRNRRQMEVISLRLKLQKLQEDAVENDDYDKAETLQQRLEDLEQEKISLHFQLPSRQPALSSFLGHLAAQVQAALRRGATQQASGDDTHTPLRMEPRLLEPTAQDSLHVSITRRDWLLQEKQQLQKEIEALQARMFVLEAKDQQLRREIEEQEQQLQWQGCDLTPLVGQLSLGQLQEVSKALQDTLASAGQIPFHAEPPETIRSLQERIKSLNLSLKEITTKVCMSEKFCSTLRKKVNDIETQLPALLEAKMHAISGNHFWTAKDLTEEIRSLTSEREGLEGLLSKLLVLSSRNVKKLGSVKEDYNRLRREVEHQETAYETSVKENTMKYMETLKNKLCSCKCPLLGKVWEADLEACRLLIQSLQLQEARGSLSVEDERQMDDLEGAAPPIPPRLHSEDKRKTPLKVLEEWKTHLIPSLHCAGGEQKEESYILSAELGEKCEDIGKKLLYLEDQLHTAIHSHDEDLIQSLRRELQMVKETLQAMILQLQPAKEAGEREAAASCMTAGVHEAQA.

Residues 1-18 (MPGGGPQGAPAAAGGGGV) are compositionally biased toward gly residues. Disordered regions lie at residues 1–24 (MPGGGPQGAPAAAGGGGVSHRAGS), 179–205 (SAELSSNSCSPGCGPEVPPTPPGSHSA), 221–257 (GERGEAEGCPPSREAESHCQSPQEMGAKAASLDGPHE), and 278–323 (AQAA…SGDA). The interval 1–292 (MPGGGPQGAP…NSSRPERDMH (292 aa)) is interaction with MAP1A. The Interaction with FBXW7 signature appears at 197 to 203 (PTPPGSH). Residues 285-295 (SRPERDMHSLP) are compositionally biased toward basic and acidic residues. Residues 293-696 (SLPDMDPGSS…LGKVWEADLE (404 aa)) are interaction with TRAF3IP1. Residues 296 to 309 (DMDPGSSSSLDPSL) are compositionally biased toward low complexity. Coiled coils occupy residues 366–394 (ENDDYDKAETLQQRLEDLEQEKISLHFQL), 452–505 (ITRR…CDLT), and 602–666 (WTAK…SVKE). Lys-372 participates in a covalent cross-link: Glycyl lysine isopeptide (Lys-Gly) (interchain with G-Cter in ubiquitin). The interval 440 to 597 (LEPTAQDSLH…LLEAKMHAIS (158 aa)) is required for localization to punctate cytoplasmic foci. A necessary and sufficient for interaction with PCNT and localization at the centrosome region spans residues 446–854 (DSLHVSITRR…MTAGVHEAQA (409 aa)). The tract at residues 598-854 (GNHFWTAKDL…MTAGVHEAQA (257 aa)) is interaction with ATF4 and ATF5. The disordered stretch occupies residues 716-739 (VEDERQMDDLEGAAPPIPPRLHSE). Residues 727 to 854 (GAAPPIPPRL…MTAGVHEAQA (128 aa)) form an interaction with PAFAH1B1 region. Residues 802–830 (SHDEDLIQSLRRELQMVKETLQAMILQLQ) adopt a coiled-coil conformation. The interval 802 to 835 (SHDEDLIQSLRRELQMVKETLQAMILQLQPAKEA) is interaction with NDEL1.

As to quaternary structure, interacts with NDEL1. Interacts with CCDC88A (via C-terminus); the interaction is direct. Interacts with GSK3B. Interacts with tubulin alpha, ACTN2, ANKHD1, ATF4, ATF5, CEP63, EIF3S3, MAP1A, NDEL1, PAFAH1B1, RANBP9, SPTBN4, SYNE1 and TRAF3IP1. Interaction with microtubules may be mediated in part by TRAF3IP1. Interacts (via C-terminal) with PCNT. Interacts with CHCHD6. Interacts with CCDC141. Interacts with FBXW7, the substrate-recognition component of a SCF (SKP1-CUL1-F-box protein) E3 ubiquitin-protein ligase complex; the interaction targets DISC1 for proteasomal degradation. Interacts with ZNF365. Interacts with ATF4; inhibiting ATF4 transcription factor activity by disrupting ATF4 dimerization and DNA-binding. Interacts with PDE4B (isoform PDE4B5). Ubiquitinated. Ubiquitination with 'Lys-48'-linked polyubiquitin chains leads to its proteasomal degradation. As to expression, ubiquitous. Highly expressed in the dentate gyrus of the hippocampus. Also expressed in the temporal and parahippocampal cortices and cells of the white matter.

It localises to the cytoplasm. It is found in the cytoskeleton. Its subcellular location is the mitochondrion. The protein resides in the microtubule organizing center. The protein localises to the centrosome. It localises to the postsynaptic density. Functionally, involved in the regulation of multiple aspects of embryonic and adult neurogenesis. Required for neural progenitor proliferation in the ventrical/subventrical zone during embryonic brain development and in the adult dentate gyrus of the hippocampus. Participates in the Wnt-mediated neural progenitor proliferation as a positive regulator by modulating GSK3B activity and CTNNB1 abundance. Plays a role as a modulator of the AKT-mTOR signaling pathway controlling the tempo of the process of newborn neurons integration during adult neurogenesis, including neuron positioning, dendritic development and synapse formation. Inhibits the activation of AKT-mTOR signaling upon interaction with CCDC88A. Regulates the migration of early-born granule cell precursors toward the dentate gyrus during the hippocampal development. Inhibits ATF4 transcription factor activity in neurons by disrupting ATF4 dimerization and DNA-binding. Plays a role, together with PCNT, in the microtubule network formation. This chain is Disrupted in schizophrenia 1 protein, found in Homo sapiens (Human).